The primary structure comprises 400 residues: Enoyl-[acyl-carrier-protein] reductase [NADH] (400 aa).

Residues 48–53 (GSSSGY), 74–75 (FE), 111–112 (DA), and 139–140 (LA) each bind NAD(+). Y225 serves as a coordination point for substrate. The Proton donor role is filled by Y235. Residues K244 and 273 to 275 (VVT) each bind NAD(+).

This sequence belongs to the TER reductase family. As to quaternary structure, monomer.

The catalysed reaction is a 2,3-saturated acyl-[ACP] + NAD(+) = a (2E)-enoyl-[ACP] + NADH + H(+). It functions in the pathway lipid metabolism; fatty acid biosynthesis. Involved in the final reduction of the elongation cycle of fatty acid synthesis (FAS II). Catalyzes the reduction of a carbon-carbon double bond in an enoyl moiety that is covalently linked to an acyl carrier protein (ACP). This Shewanella oneidensis (strain ATCC 700550 / JCM 31522 / CIP 106686 / LMG 19005 / NCIMB 14063 / MR-1) protein is Enoyl-[acyl-carrier-protein] reductase [NADH].